We begin with the raw amino-acid sequence, 123 residues long: Small ribosomal subunit protein uS12 (123 aa).

The residue at position 89 (Asp89) is a 3-methylthioaspartic acid. The segment at 104-123 (SVGVKDRKKSRSKYGAKRPK) is disordered. The segment covering 109–123 (DRKKSRSKYGAKRPK) has biased composition (basic residues).

The protein belongs to the universal ribosomal protein uS12 family. As to quaternary structure, part of the 30S ribosomal subunit. Contacts proteins S8 and S17. May interact with IF1 in the 30S initiation complex.

Functionally, with S4 and S5 plays an important role in translational accuracy. Interacts with and stabilizes bases of the 16S rRNA that are involved in tRNA selection in the A site and with the mRNA backbone. Located at the interface of the 30S and 50S subunits, it traverses the body of the 30S subunit contacting proteins on the other side and probably holding the rRNA structure together. The combined cluster of proteins S8, S12 and S17 appears to hold together the shoulder and platform of the 30S subunit. The protein is Small ribosomal subunit protein uS12 of Geotalea daltonii (strain DSM 22248 / JCM 15807 / FRC-32) (Geobacter daltonii).